Here is a 793-residue protein sequence, read N- to C-terminus: Copalyl diphosphate synthase CPS1, chloroplastic (793 aa).

The N-terminal 59 residues, 1–59, are a transit peptide targeting the chloroplast; that stretch reads MASLSSTILSRSPAARRRITPASAKLHRPECFATSAWMGSSSKNLSLSYQLNHKKISVA. Lys-238 lines the substrate pocket. Residues Asp-370 and Asp-372 each contribute to the Mg(2+) site. The DXDD motif signature appears at 370–373; sequence DIDD. Lys-457 serves as a coordination point for substrate.

It belongs to the terpene synthase family. Requires Mg(2+) as cofactor.

Its subcellular location is the plastid. It is found in the chloroplast. It carries out the reaction (2E,6E,10E)-geranylgeranyl diphosphate = (+)-copalyl diphosphate. It participates in secondary metabolite biosynthesis; terpenoid biosynthesis. Involved in tanshinone biosynthesis in hairy roots. Catalyzes the conversion of geranylgeranyl diphosphate (GGPP) to copalyl diphosphate (CPP). The protein is Copalyl diphosphate synthase CPS1, chloroplastic of Salvia miltiorrhiza (Chinese sage).